The chain runs to 1116 residues: Phosphatidylinositol 4-kinase beta 2 (1116 aa).

One can recognise a PIK helical domain in the interval 1–143 (MQMAQFLSLV…SRIQEKCQIA (143 aa)). 8 consecutive repeat copies span residues 210-229 (ADDN…RDAL), 242-261 (CEKD…EDDE), 264-283 (SNSE…EEEE), 286-304 (NNSE…DEEE), 307-326 (SSSD…DEEE), 329-348 (ANSE…EDEE), 351-370 (ANTE…EDDK), and 378-396 (EEKD…DEKR). Positions 210–507 (ADDNKIFKRL…FRDRDRSVED (298 aa)) are 11 X 20 AA approximate repeats (PPC). Residues 394–404 (EKRNGNERNET) are compositionally biased toward basic and acidic residues. A disordered region spans residues 394 to 417 (EKRNGNERNETDETVYTDETSGED). Positions 405–415 (DETVYTDETSG) are enriched in acidic residues. Repeat unit 9 spans residues 418–436 (NGREGFFKKLFKEKFEDKP). Phosphoserine is present on residues Ser-447 and Ser-452. 2 repeat units span residues 452-470 (SSEF…EDVK) and 488-507 (PGTE…SVED). Disordered stretches follow at residues 515-540 (KYKE…LPNN) and 794-813 (GEAP…SDAQ). In terms of domain architecture, PI3K/PI4K catalytic spans 830–1101 (EFWEGKRLRI…LISSSLDAWR (272 aa)). The segment at 836–842 (RLRIRKD) is G-loop. The segment at 964 to 972 (QIKDRHNGN) is catalytic loop. The activation loop stretch occupies residues 983 to 1007 (HIDFGFMLSNSPGGVNFESAPFKLT).

This sequence belongs to the PI3/PI4-kinase family. Type III PI4K subfamily.

The protein localises to the cell membrane. Its subcellular location is the golgi apparatus. It is found in the trans-Golgi network. The protein resides in the cytoplasmic vesicle membrane. It catalyses the reaction a 1,2-diacyl-sn-glycero-3-phospho-(1D-myo-inositol) + ATP = a 1,2-diacyl-sn-glycero-3-phospho-(1D-myo-inositol 4-phosphate) + ADP + H(+). Functionally, acts on phosphatidylinositol (PtdIns) in the first committed step in the production of the second messenger inositol-1,4,5-trisphosphate. Necessary for proper organization of the trans-Golgi network (TGN) and post-Golgi secretion in root hairs. Together with PI4KB1, required during polarized root hair expansion and pollen tube elongation. Functions redundantly with PI4KB1 upstream of the cold response phosphoinositide-dependent phospholipase C (PI-PLC) pathway. In Arabidopsis thaliana (Mouse-ear cress), this protein is Phosphatidylinositol 4-kinase beta 2 (PI4KB2).